The chain runs to 831 residues: Multiphosphoryl transfer protein 1 (831 aa).

One can recognise an HPr domain in the interval 1–90 (MLTIQFLCPL…EYIQVRFIDS (90 aa)). Residue His15 is the Pros-phosphohistidine intermediate; for HPr activity of the active site. Phosphohistidine; by EI is present on His15. The PTS EI stretch occupies residues 119-650 (GNVLASGVGV…AVKSQLRQLD (532 aa)). Residue His298 is the Tele-phosphohistidine intermediate; for PTS EI activity of the active site. His298 is modified (phosphohistidine; by autocatalysis). Phosphoenolpyruvate contacts are provided by Arg405 and Arg441. 2 residues coordinate Mg(2+): Glu540 and Asp564. Phosphoenolpyruvate-binding positions include 563–564 (ND) and Arg574. The active-site Proton donor; for EI activity is the Cys611. The 144-residue stretch at 685-828 (PLLALENIFV…QSILTLLETE (144 aa)) folds into the PTS EIIA type-2 domain. Catalysis depends on His747, which acts as the Tele-phosphohistidine intermediate; for PTS EIIA activity. Residue His747 is modified to Phosphohistidine; by HPr.

It belongs to the PEP-utilizing enzyme family. The cofactor is Mg(2+).

Its subcellular location is the cytoplasm. It carries out the reaction L-histidyl-[protein] + phosphoenolpyruvate = N(pros)-phospho-L-histidyl-[protein] + pyruvate. It catalyses the reaction D-fructose(out) + N(pros)-phospho-L-histidyl-[protein] = D-fructose 1-phosphate(in) + L-histidyl-[protein]. Functionally, multifunctional protein that includes general (non sugar-specific) and sugar-specific components of the phosphoenolpyruvate-dependent sugar phosphotransferase system (sugar PTS). This major carbohydrate active transport system catalyzes the phosphorylation of incoming sugar substrates concomitantly with their translocation across the cell membrane. The enzyme II FryABC PTS system is involved in fructose transport. This is Multiphosphoryl transfer protein 1 (fryA) from Escherichia coli (strain K12).